A 397-amino-acid chain; its full sequence is Guanine nucleotide-binding protein G(s) subunit alpha (397 aa).

A disordered region spans residues 1–23; the sequence is MGCLGNSKTEDQRNEEKAQREAN. Residue Gly2 is the site of N-palmitoyl glycine attachment. A lipid anchor (S-palmitoyl cysteine) is attached at Cys3. Residues 8-23 show a composition bias toward basic and acidic residues; that stretch reads KTEDQRNEEKAQREAN. The G-alpha domain occupies 39-397; it reads ATHRLLLLGA…RMHLRQYELL (359 aa). Positions 42–55 are G1 motif; the sequence is RLLLLGAGESGKST. Residues 47–55, 182–189, 208–212, 277–280, and Ala369 each bind GTP; these read GAGESGKST, LLRCRVLT, DVGGQ, and NKQD. Mg(2+)-binding residues include Ser54 and Thr189. The interval 181-189 is G2 motif; the sequence is DLLRCRVLT. The tract at residues 204–213 is G3 motif; the sequence is FHMFDVGGQR. The interval 273–280 is G4 motif; it reads ILFLNKQD. A G5 motif region spans residues 367 to 372; the sequence is TCAVDT.

It belongs to the G-alpha family. G(s) subfamily. In terms of assembly, heterotrimeric G proteins are composed of 3 units; alpha, beta and gamma. The alpha chain contains the guanine nucleotide binding site. Interacts with CRY1; the interaction may block GPCR-mediated regulation of cAMP concentrations. Interacts with ADCY6 and stimulates its adenylyl cyclase activity. Interacts with ADCY2 and ADCY5. Stimulates the ADCY5 adenylyl cyclase activity. Interaction with SASH1.

The protein resides in the cell membrane. Guanine nucleotide-binding proteins (G proteins) function as transducers in numerous signaling pathways controlled by G protein-coupled receptors (GPCRs). Signaling involves the activation of adenylyl cyclases, resulting in increased levels of the signaling molecule cAMP. GNAS functions downstream of several GPCRs, including beta-adrenergic receptors. Stimulates the Ras signaling pathway via RAPGEF2. In Sus scrofa (Pig), this protein is Guanine nucleotide-binding protein G(s) subunit alpha (GNAS).